A 278-amino-acid chain; its full sequence is 4-deoxy-L-threo-5-hexosulose-uronate ketol-isomerase (278 aa).

Zn(2+) is bound by residues His-196, His-198, Glu-203, and His-245.

The protein belongs to the KduI family. As to quaternary structure, homohexamer. Zn(2+) serves as cofactor.

It catalyses the reaction 5-dehydro-4-deoxy-D-glucuronate = 3-deoxy-D-glycero-2,5-hexodiulosonate. The protein operates within glycan metabolism; pectin degradation; 2-dehydro-3-deoxy-D-gluconate from pectin: step 4/5. In terms of biological role, catalyzes the isomerization of 5-dehydro-4-deoxy-D-glucuronate to 3-deoxy-D-glycero-2,5-hexodiulosonate. This is 4-deoxy-L-threo-5-hexosulose-uronate ketol-isomerase from Escherichia coli O127:H6 (strain E2348/69 / EPEC).